A 1353-amino-acid chain; its full sequence is Tenascin-R (1353 aa).

A signal peptide spans 1–33; that stretch reads MGTDSENPVLRNVLISFNLLLLGAVLKPFECRL. Residues 132-156 adopt a coiled-coil conformation; that stretch reads SLQELLSRIEMLEREVSMLRDQCNS. 2 N-linked (GlcNAc...) asparagine glycosylation sites follow: N179 and N197. EGF-like domains are found at residues 187 to 198, 234 to 260, 265 to 291, and 292 to 323; these read CICSEGWAGSNC, CPAGCGSRGLCVDGECICEEGFGGEDC, CPRDCSGRGHCDNGTCVCAEGYAGEDC, and GWLRCPNACSGRGVCQDGLCICEDGYGGQDCS. N-linked (GlcNAc...) asparagine glycosylation is present at N277. Intrachain disulfides connect C296/C306 and C313/C322. 9 consecutive Fibronectin type-III domains span residues 327–419, 420–504, 505–594, 595–686, 687–776, 777–863, 864–952, 953–1037, and 1038–1126; these read PPEN…TPQG, LKFK…TLID, GPTQ…TEID, APKN…TELD, SPRD…VRPI, TQLH…TGMD, APKD…AMDA, PLGV…TLLD, and PPTN…GGRV. Residues N391, N469, and N580 are each glycosylated (N-linked (GlcNAc...) asparagine). Residues N734, N790, N872, N1031, N1041, N1256, and N1342 are each glycosylated (N-linked (GlcNAc...) asparagine). One can recognise a Fibrinogen C-terminal domain in the interval 1124 to 1339; that stretch reads GRVFANPQDC…FVEMKMRPYN (216 aa).

This sequence belongs to the tenascin family. As to quaternary structure, forms homodimers and homotrimers. Interacts with CNTN1, NFASC and CSPG5. As to expression, brain specific.

The protein resides in the secreted. It localises to the extracellular space. The protein localises to the extracellular matrix. Its function is as follows. Neural extracellular matrix (ECM) protein involved in interactions with different cells and matrix components. Involved in cell attachment and neurite formation. Interaction with CNTN1 enhances the neurite outgrowth. In Gallus gallus (Chicken), this protein is Tenascin-R (TNR).